A 368-amino-acid polypeptide reads, in one-letter code: 1-deoxy-D-xylulose 5-phosphate reductoisomerase (368 aa).

Thr-7, Gly-8, Ser-9, Ile-10, Gly-31, Lys-32, Asn-33, and Asn-113 together coordinate NADPH. Lys-114 provides a ligand contact to 1-deoxy-D-xylulose 5-phosphate. Glu-115 is a binding site for NADPH. Asp-133 is a binding site for Mn(2+). 1-deoxy-D-xylulose 5-phosphate is bound by residues Ser-134, Glu-135, Ser-158, and His-181. Glu-135 provides a ligand contact to Mn(2+). Gly-187 lines the NADPH pocket. 1-deoxy-D-xylulose 5-phosphate-binding residues include Ser-194, Asn-199, Lys-200, and Glu-203. Glu-203 serves as a coordination point for Mn(2+).

The protein belongs to the DXR family. It depends on Mg(2+) as a cofactor. Mn(2+) is required as a cofactor.

The catalysed reaction is 2-C-methyl-D-erythritol 4-phosphate + NADP(+) = 1-deoxy-D-xylulose 5-phosphate + NADPH + H(+). It participates in isoprenoid biosynthesis; isopentenyl diphosphate biosynthesis via DXP pathway; isopentenyl diphosphate from 1-deoxy-D-xylulose 5-phosphate: step 1/6. Its function is as follows. Catalyzes the NADPH-dependent rearrangement and reduction of 1-deoxy-D-xylulose-5-phosphate (DXP) to 2-C-methyl-D-erythritol 4-phosphate (MEP). The protein is 1-deoxy-D-xylulose 5-phosphate reductoisomerase of Helicobacter pylori (strain ATCC 700392 / 26695) (Campylobacter pylori).